The sequence spans 195 residues: Pyridoxal 5'-phosphate synthase subunit PdxT (195 aa).

46-48 is a binding site for L-glutamine; the sequence is GES. The active-site Nucleophile is Cys78. Residues Arg107 and 136–137 contribute to the L-glutamine site; that span reads IR. Catalysis depends on charge relay system residues His173 and Glu175.

The protein belongs to the glutaminase PdxT/SNO family. As to quaternary structure, in the presence of PdxS, forms a dodecamer of heterodimers. Only shows activity in the heterodimer.

The catalysed reaction is aldehydo-D-ribose 5-phosphate + D-glyceraldehyde 3-phosphate + L-glutamine = pyridoxal 5'-phosphate + L-glutamate + phosphate + 3 H2O + H(+). The enzyme catalyses L-glutamine + H2O = L-glutamate + NH4(+). The protein operates within cofactor biosynthesis; pyridoxal 5'-phosphate biosynthesis. In terms of biological role, catalyzes the hydrolysis of glutamine to glutamate and ammonia as part of the biosynthesis of pyridoxal 5'-phosphate. The resulting ammonia molecule is channeled to the active site of PdxS. The chain is Pyridoxal 5'-phosphate synthase subunit PdxT from Dehalococcoides mccartyi (strain CBDB1).